A 166-amino-acid chain; its full sequence is UPF0304 protein VS_1049 (166 aa).

This sequence belongs to the UPF0304 family.

The protein is UPF0304 protein VS_1049 of Vibrio atlanticus (strain LGP32) (Vibrio splendidus (strain Mel32)).